We begin with the raw amino-acid sequence, 133 residues long: uncharacterized protein (133 aa).

4 consecutive transmembrane segments (helical) span residues 5–27, 42–64, 77–99, and 103–125; these read KLFF…FSLI, IAWN…YSLY, ALIS…TFSS, and LVWW…LLLK.

The protein localises to the cell membrane. This is an uncharacterized protein from Bacillus subtilis (strain 168).